The sequence spans 418 residues: Sterigmatocystin 8-O-methyltransferase (418 aa).

A propeptide spanning residues 1 to 41 (MTLPNKAALVGLAHTLSEQVKRYLVTADETKSPEDHKLCIE) is cleaved from the precursor. A substrate-binding site is contributed by 170-176 (MRSAAYF). The segment at 206–225 (LFDYYSTVDEVRGRRFDLGM) is substrate binding. Residues 254–255 (GG), Asp277, 297–298 (DI), and Arg313 contribute to the S-adenosyl-L-methionine site. The Proton acceptor role is filled by His317.

Belongs to the class I-like SAM-binding methyltransferase superfamily. Cation-independent O-methyltransferase family. COMT subfamily.

It carries out the reaction sterigmatocystin + S-adenosyl-L-methionine = 8-O-methylsterigmatocystin + S-adenosyl-L-homocysteine + H(+). The catalysed reaction is dihydrosterigmatocystin + S-adenosyl-L-methionine = 8-O-methyldihydrosterigmatocystin + S-adenosyl-L-homocysteine + H(+). It participates in mycotoxin biosynthesis; aflatoxin biosynthesis. Its function is as follows. Involved in the conversion of sterigmatocystin to O-methylsterigmatocystin (OMST) and dihydrosterigmatocystin to dihydro-o-methylsterigmatocystin in the aflatoxin biosynthesis pathway. The protein is Sterigmatocystin 8-O-methyltransferase (omtA) of Aspergillus flavus (strain ATCC 200026 / FGSC A1120 / IAM 13836 / NRRL 3357 / JCM 12722 / SRRC 167).